The following is a 281-amino-acid chain: Cytochrome c oxidase subunit 3 (281 aa).

Over 1–15 the chain is Mitochondrial matrix; the sequence is MTHQTHAYHMVNPSP. Residues 16-34 traverse the membrane as a helical segment; the sequence is WPLTGALSALLLTSGLIMW. Over 35-40 the chain is Mitochondrial intermembrane; that stretch reads FHYNSS. Residues 41 to 66 traverse the membrane as a helical segment; that stretch reads TLMFMGLTTMLLTMYQWWRDIIREGT. Residues 67 to 72 are Mitochondrial matrix-facing; sequence FQGHHT. Residues 73–105 form a helical membrane-spanning segment; it reads PVVQKGLRYGMILFILSEVFFFIGFFWAFYHSS. Residues 106 to 128 lie on the Mitochondrial intermembrane side of the membrane; the sequence is LAPTPELGGCWPPTGIHPLNPLE. Residues 129–152 traverse the membrane as a helical segment; it reads VPLLNTSILLASGVSITWAHHSLM. Residues 153–155 are Mitochondrial matrix-facing; sequence EGN. Residues 156–183 form a helical membrane-spanning segment; the sequence is RKQMIQALLITISLGLYFTILQAMEYYE. The Mitochondrial intermembrane portion of the chain corresponds to 184–190; the sequence is ASFTISD. A helical membrane pass occupies residues 191-223; the sequence is GVYGSTFFVATGFHGLHVIIGSTFLIVCLLRQL. Residues 224–232 lie on the Mitochondrial matrix side of the membrane; it reads FYHFTSTHH. The chain crosses the membrane as a helical span at residues 233 to 256; the sequence is FGFEAAAWYWHFVDVVWLFLYVSI. Residues 257–281 are Mitochondrial intermembrane-facing; sequence YWWGSYFSSMISTTDFQSLSSGSNQ.

The protein belongs to the cytochrome c oxidase subunit 3 family. In terms of assembly, component of the cytochrome c oxidase (complex IV, CIV), a multisubunit enzyme composed of 14 subunits. The complex is composed of a catalytic core of 3 subunits MT-CO1, MT-CO2 and MT-CO3, encoded in the mitochondrial DNA, and 11 supernumerary subunits COX4I, COX5A, COX5B, COX6A, COX6B, COX6C, COX7A, COX7B, COX7C, COX8 and NDUFA4, which are encoded in the nuclear genome. The complex exists as a monomer or a dimer and forms supercomplexes (SCs) in the inner mitochondrial membrane with NADH-ubiquinone oxidoreductase (complex I, CI) and ubiquinol-cytochrome c oxidoreductase (cytochrome b-c1 complex, complex III, CIII), resulting in different assemblies (supercomplex SCI(1)III(2)IV(1) and megacomplex MCI(2)III(2)IV(2)).

The protein localises to the mitochondrion inner membrane. It catalyses the reaction 4 Fe(II)-[cytochrome c] + O2 + 8 H(+)(in) = 4 Fe(III)-[cytochrome c] + 2 H2O + 4 H(+)(out). Functionally, component of the cytochrome c oxidase, the last enzyme in the mitochondrial electron transport chain which drives oxidative phosphorylation. The respiratory chain contains 3 multisubunit complexes succinate dehydrogenase (complex II, CII), ubiquinol-cytochrome c oxidoreductase (cytochrome b-c1 complex, complex III, CIII) and cytochrome c oxidase (complex IV, CIV), that cooperate to transfer electrons derived from NADH and succinate to molecular oxygen, creating an electrochemical gradient over the inner membrane that drives transmembrane transport and the ATP synthase. Cytochrome c oxidase is the component of the respiratory chain that catalyzes the reduction of oxygen to water. Electrons originating from reduced cytochrome c in the intermembrane space (IMS) are transferred via the dinuclear copper A center (CU(A)) of subunit 2 and heme A of subunit 1 to the active site in subunit 1, a binuclear center (BNC) formed by heme A3 and copper B (CU(B)). The BNC reduces molecular oxygen to 2 water molecules using 4 electrons from cytochrome c in the IMS and 4 protons from the mitochondrial matrix. This Didelphis virginiana (North American opossum) protein is Cytochrome c oxidase subunit 3 (MT-CO3).